Reading from the N-terminus, the 209-residue chain is Methylated-DNA--protein-cysteine methyltransferase (209 aa).

Zn(2+) is bound at residue Cys-5. Ser-14 carries the phosphoserine modification. 3 residues coordinate Zn(2+): Cys-24, His-29, and His-89. The DNA site is built by Thr-99, Tyr-118, Gln-119, Asn-127, and Arg-132. The active-site Nucleophile; methyl group acceptor is Cys-149. Residue Ser-155 coordinates DNA.

The protein belongs to the MGMT family. Requires Zn(2+) as cofactor.

The protein localises to the nucleus. The catalysed reaction is a 6-O-methyl-2'-deoxyguanosine in DNA + L-cysteinyl-[protein] = S-methyl-L-cysteinyl-[protein] + a 2'-deoxyguanosine in DNA. The enzyme catalyses a 4-O-methyl-thymidine in DNA + L-cysteinyl-[protein] = a thymidine in DNA + S-methyl-L-cysteinyl-[protein]. Functionally, involved in the cellular defense against the biological effects of O6-methylguanine (O6-MeG) and O4-methylthymine (O4-MeT) in DNA. Repairs the methylated nucleobase in DNA by stoichiometrically transferring the methyl group to a cysteine residue in the enzyme. This is a suicide reaction: the enzyme is irreversibly inactivated. In Rattus norvegicus (Rat), this protein is Methylated-DNA--protein-cysteine methyltransferase (Mgmt).